A 970-amino-acid polypeptide reads, in one-letter code: Sodium/calcium exchanger 1 (970 aa).

An N-terminal signal peptide occupies residues 1–32 (MLQLRLLPTFSMGCHLLAVVALLFSHVDLISA). Topologically, residues 33-71 (ETEMEGEGNETGECTGSYYCKKGVILPIWEPQDPSFGDK) are extracellular. Asn41 carries an N-linked (GlcNAc...) asparagine glycan. A helical transmembrane segment spans residues 72–92 (IARATVYFVAMVYMFLGVSII). Residues 93 to 133 (ADRFMSSIEVITSQEKEITIKKPNGETTKTTVRIWNETVSN) are Cytoplasmic-facing. Residues 134–154 (LTLMALGSSAPEILLSVIEVC) traverse the membrane as a helical segment. One copy of the Alpha-1 repeat lies at 138–178 (ALGSSAPEILLSVIEVCGHNFTAGDLGPSTIVGSAAFNMFI). Over 155–167 (GHNFTAGDLGPST) the chain is Extracellular. Asn157 carries an N-linked (GlcNAc...) asparagine glycan. The helical transmembrane segment at 168–188 (IVGSAAFNMFIIIALCVYVVP) threads the bilayer. The Cytoplasmic portion of the chain corresponds to 189-201 (DGETRKIKHLRVF). The helical transmembrane segment at 202 to 222 (FVTAAWSIFAYTWLYIILSVI) threads the bilayer. At 223 to 228 (SPGVVE) the chain is on the extracellular side. The chain crosses the membrane as a helical span at residues 229–249 (VWEGLLTFFFFPICVVFAWVA). Residues 250–797 (DRRLLFYKYV…FVPPTEYWNG (548 aa)) are Cytoplasmic-facing. Residues 251 to 270 (RRLLFYKYVYKRYRAGKQRG) are putative calmodulin-binding region. Phosphoserine is present on residues Ser282 and Ser389. Calx-beta domains lie at 393 to 493 (VNTE…VHLS) and 524 to 624 (ATVT…LEIG). The Ca(2+) site is built by Glu417, Asp453, Asp478, Asp479, Ile481, Glu483, Glu486, Asp530, Asp531, Asp532, Glu548, Asp584, Asp610, Glu611, Glu612, and Glu715. The helical transmembrane segment at 798 to 818 (WACFIVSILMIGILTAFIGDL) threads the bilayer. Over 819–821 (ASH) the chain is Extracellular. The chain crosses the membrane as a helical span at residues 822–842 (FGCTIGLKDSVTAVVFVALGT). One copy of the Alpha-2 repeat lies at 839-875 (ALGTSVPDTFASKVAATQDQYADASIGNVTGSNAVNV). At 843-871 (SVPDTFASKVAATQDQYADASIGNVTGSN) the chain is on the cytoplasmic side. Residues 872–892 (AVNVFLGIGVAWSIAAIYHAA) form a helical membrane-spanning segment. Topologically, residues 893–903 (NGEQFKVSPGT) are extracellular. Residues 904 to 924 (LAFSVTLFTIFAFINVGVLLY) traverse the membrane as a helical segment. The Cytoplasmic portion of the chain corresponds to 925-941 (RRRPEIGGELGGPRTAK). Residues 942–962 (LLTSCLFVLLWLLYIFFSSLE) traverse the membrane as a helical segment. The Extracellular portion of the chain corresponds to 963–970 (AYCHIKGF).

Belongs to the Ca(2+):cation antiporter (CaCA) (TC 2.A.19) family. SLC8 subfamily. As to expression, cardiac sarcolemma (at protein level).

The protein resides in the cell membrane. It is found in the sarcolemma. The catalysed reaction is Ca(2+)(in) + 3 Na(+)(out) = Ca(2+)(out) + 3 Na(+)(in). With respect to regulation, activated by micromolar levels of Ca(2+). In the absence of regulatory Ca(2+), channels open rapidly, and then inactivate rapidly. Inactivation is enhanced by Na(+) and is inhibited by micromolar levels of Ca(2+). Mediates the exchange of one Ca(2+) ion against three to four Na(+) ions across the cell membrane, and thereby contributes to the regulation of cytoplasmic Ca(2+) levels and Ca(2+)-dependent cellular processes. Contributes to Ca(2+) transport during excitation-contraction coupling in muscle. In a first phase, voltage-gated channels mediate the rapid increase of cytoplasmic Ca(2+) levels due to release of Ca(2+) stores from the endoplasmic reticulum. SLC8A1 mediates the export of Ca(2+) from the cell during the next phase, so that cytoplasmic Ca(2+) levels rapidly return to baseline. Required for normal embryonic heart development and the onset of heart contractions. The chain is Sodium/calcium exchanger 1 (SLC8A1) from Canis lupus familiaris (Dog).